A 346-amino-acid chain; its full sequence is Methylthioribose-1-phosphate isomerase (346 aa).

Substrate is bound by residues 46-48 (RGA), R89, and Q196. Residue D237 is the Proton donor of the active site. 247–248 (NK) provides a ligand contact to substrate.

The protein belongs to the eIF-2B alpha/beta/delta subunits family. MtnA subfamily.

The enzyme catalyses 5-(methylsulfanyl)-alpha-D-ribose 1-phosphate = 5-(methylsulfanyl)-D-ribulose 1-phosphate. It participates in amino-acid biosynthesis; L-methionine biosynthesis via salvage pathway; L-methionine from S-methyl-5-thio-alpha-D-ribose 1-phosphate: step 1/6. Catalyzes the interconversion of methylthioribose-1-phosphate (MTR-1-P) into methylthioribulose-1-phosphate (MTRu-1-P). This is Methylthioribose-1-phosphate isomerase from Geobacter sulfurreducens (strain ATCC 51573 / DSM 12127 / PCA).